Here is a 1293-residue protein sequence, read N- to C-terminus: Phosphoribosylformylglycinamidine synthase (1293 aa).

Residues 305 to 316 (GAATGSGGEIRD) and alanine 676 each bind ATP. The segment at 305-327 (GAATGSGGEIRDEGATGRGSKPK) is disordered. Mg(2+) contacts are provided by aspartate 677, glutamate 716, asparagine 720, and aspartate 884. Position 886 (serine 886) interacts with ATP. Positions 1040–1293 (MAILREQGVN…MFRNARVNLG (254 aa)) constitute a Glutamine amidotransferase type-1 domain. The active-site Nucleophile is the cysteine 1133. Catalysis depends on residues histidine 1258 and glutamate 1260.

In the N-terminal section; belongs to the FGAMS family. As to quaternary structure, monomer.

It localises to the cytoplasm. The catalysed reaction is N(2)-formyl-N(1)-(5-phospho-beta-D-ribosyl)glycinamide + L-glutamine + ATP + H2O = 2-formamido-N(1)-(5-O-phospho-beta-D-ribosyl)acetamidine + L-glutamate + ADP + phosphate + H(+). The protein operates within purine metabolism; IMP biosynthesis via de novo pathway; 5-amino-1-(5-phospho-D-ribosyl)imidazole from N(2)-formyl-N(1)-(5-phospho-D-ribosyl)glycinamide: step 1/2. Phosphoribosylformylglycinamidine synthase involved in the purines biosynthetic pathway. Catalyzes the ATP-dependent conversion of formylglycinamide ribonucleotide (FGAR) and glutamine to yield formylglycinamidine ribonucleotide (FGAM) and glutamate. This is Phosphoribosylformylglycinamidine synthase from Shewanella oneidensis (strain ATCC 700550 / JCM 31522 / CIP 106686 / LMG 19005 / NCIMB 14063 / MR-1).